Reading from the N-terminus, the 199-residue chain is Guanylate kinase (199 aa).

The Guanylate kinase-like domain maps to 20–198 (GKLIILTGPS…ALQAIEVALF (179 aa)). 27 to 34 (GPSGVGKG) contacts ATP.

The protein belongs to the guanylate kinase family.

The protein localises to the cytoplasm. The enzyme catalyses GMP + ATP = GDP + ADP. Its function is as follows. Essential for recycling GMP and indirectly, cGMP. The sequence is that of Guanylate kinase from Nostoc sp. (strain PCC 7120 / SAG 25.82 / UTEX 2576).